A 226-amino-acid polypeptide reads, in one-letter code: PKHD-type hydroxylase PputW619_4316 (226 aa).

A Fe2OG dioxygenase domain is found at 78 to 178 (KVFPPLINCY…RYAAFFWTQS (101 aa)). 3 residues coordinate Fe cation: His-96, Asp-98, and His-159. Arg-169 contributes to the 2-oxoglutarate binding site.

It depends on Fe(2+) as a cofactor. Requires L-ascorbate as cofactor.

In Pseudomonas putida (strain W619), this protein is PKHD-type hydroxylase PputW619_4316.